We begin with the raw amino-acid sequence, 208 residues long: Riboflavin synthase (208 aa).

2 Lumazine-binding repeats span residues 1-97 (MFTG…MGGH) and 98-195 (IISG…VDTT). Residues 4 to 6 (GIV), 48 to 50 (CLT), 62 to 67 (DIMKIT), 101 to 103 (GHI), Lys137, 146 to 148 (SLT), and 160 to 165 (SIIPET) each bind 2,4-dihydroxypteridine.

Homotrimer.

The enzyme catalyses 2 6,7-dimethyl-8-(1-D-ribityl)lumazine + H(+) = 5-amino-6-(D-ribitylamino)uracil + riboflavin. It functions in the pathway cofactor biosynthesis; riboflavin biosynthesis; riboflavin from 2-hydroxy-3-oxobutyl phosphate and 5-amino-6-(D-ribitylamino)uracil: step 2/2. In terms of biological role, catalyzes the dismutation of two molecules of 6,7-dimethyl-8-ribityllumazine, resulting in the formation of riboflavin and 5-amino-6-(D-ribitylamino)uracil. The polypeptide is Riboflavin synthase (ribE) (Buchnera aphidicola subsp. Schizaphis graminum (strain Sg)).